The sequence spans 140 residues: ATP synthase epsilon chain (140 aa).

This sequence belongs to the ATPase epsilon chain family. F-type ATPases have 2 components, CF(1) - the catalytic core - and CF(0) - the membrane proton channel. CF(1) has five subunits: alpha(3), beta(3), gamma(1), delta(1), epsilon(1). CF(0) has three main subunits: a, b and c.

The protein resides in the cell inner membrane. Its function is as follows. Produces ATP from ADP in the presence of a proton gradient across the membrane. The protein is ATP synthase epsilon chain of Marinobacter nauticus (strain ATCC 700491 / DSM 11845 / VT8) (Marinobacter aquaeolei).